A 345-amino-acid polypeptide reads, in one-letter code: Glycerol-3-phosphate dehydrogenase [NAD(P)+] (345 aa).

The NADPH site is built by S11, W12, H32, R33, and K106. Sn-glycerol 3-phosphate-binding residues include K106, G137, and S139. NADPH is bound at residue A141. Sn-glycerol 3-phosphate contacts are provided by K192, D245, S255, R256, and N257. The active-site Proton acceptor is the K192. R256 is an NADPH binding site. V280 and E282 together coordinate NADPH.

The protein belongs to the NAD-dependent glycerol-3-phosphate dehydrogenase family.

Its subcellular location is the cytoplasm. The enzyme catalyses sn-glycerol 3-phosphate + NAD(+) = dihydroxyacetone phosphate + NADH + H(+). The catalysed reaction is sn-glycerol 3-phosphate + NADP(+) = dihydroxyacetone phosphate + NADPH + H(+). It participates in membrane lipid metabolism; glycerophospholipid metabolism. Its function is as follows. Catalyzes the reduction of the glycolytic intermediate dihydroxyacetone phosphate (DHAP) to sn-glycerol 3-phosphate (G3P), the key precursor for phospholipid synthesis. The protein is Glycerol-3-phosphate dehydrogenase [NAD(P)+] of Bacillus pumilus (strain SAFR-032).